The sequence spans 172 residues: Large ribosomal subunit protein uL10 (172 aa).

It belongs to the universal ribosomal protein uL10 family. In terms of assembly, part of the ribosomal stalk of the 50S ribosomal subunit. The N-terminus interacts with L11 and the large rRNA to form the base of the stalk. The C-terminus forms an elongated spine to which L12 dimers bind in a sequential fashion forming a multimeric L10(L12)X complex.

Forms part of the ribosomal stalk, playing a central role in the interaction of the ribosome with GTP-bound translation factors. The sequence is that of Large ribosomal subunit protein uL10 from Bartonella bacilliformis (strain ATCC 35685 / KC583 / Herrer 020/F12,63).